The following is a 344-amino-acid chain: 4-dimethylallyltryptophan N-methyltransferase easF (344 aa).

It belongs to the methyltransferase superfamily. In terms of assembly, homodimer.

The catalysed reaction is 4-(3-methylbut-2-enyl)-L-tryptophan + S-adenosyl-L-methionine = 4-(3-methylbut-2-enyl)-L-abrine + S-adenosyl-L-homocysteine + H(+). Its pathway is alkaloid biosynthesis; ergot alkaloid biosynthesis. Functionally, 4-dimethylallyltryptophan N-methyltransferase; part of the gene cluster that mediates the biosynthesis of fungal ergot alkaloid ergovaline, the predominant ergopeptine product in E.festucae var. lolii. DmaW catalyzes the first step of ergot alkaloid biosynthesis by condensing dimethylallyl diphosphate (DMAP) and tryptophan to form 4-dimethylallyl-L-tryptophan. The second step is catalyzed by the methyltransferase easF that methylates 4-dimethylallyl-L-tryptophan in the presence of S-adenosyl-L-methionine, resulting in the formation of 4-dimethylallyl-L-abrine. The catalase easC and the FAD-dependent oxidoreductase easE then transform 4-dimethylallyl-L-abrine to chanoclavine-I which is further oxidized by easD in the presence of NAD(+), resulting in the formation of chanoclavine-I aldehyde. Agroclavine dehydrogenase easG then mediates the conversion of chanoclavine-I aldehyde to agroclavine via a non-enzymatic adduct reaction: the substrate is an iminium intermediate that is formed spontaneously from chanoclavine-I aldehyde in the presence of glutathione. The presence of easA is not required to complete this reaction. Further conversion of agroclavine to paspalic acid is a two-step process involving oxidation of agroclavine to elymoclavine and of elymoclavine to paspalic acid, the second step being performed by the elymoclavine oxidase cloA. Paspalic acid is then further converted to D-lysergic acid. Ergovaline is assembled from D-lysergic acid and three different amino acids by the D-lysergyl-peptide-synthetase composed of a monomudular (lpsB) and a trimodular (lpsA) nonribosomal peptide synthetase subunit. The protein is 4-dimethylallyltryptophan N-methyltransferase easF of Epichloe festucae var. lolii (Neotyphodium lolii).